The following is a 146-amino-acid chain: MSLVVQEQGSFQHILRLLNTNVDGNIKIVYALTTIKGVGRRYSNLVCKKADVDLHKRAGELTQEELERIVQIMQNPTHYKIPAWFLNRQNDITDGKDYHTLANNVESKLRDDLERLKKIRAHRGIRHFWGLRVRGQHTKTTGRRRA.

Residue S2 is modified to N-acetylserine. K36 is covalently cross-linked (Glycyl lysine isopeptide (Lys-Gly) (interchain with G-Cter in ubiquitin)). Position 48 is an N6-methyllysine; by RKM1 (K48). Glycyl lysine isopeptide (Lys-Gly) (interchain with G-Cter in ubiquitin) cross-links involve residues K49, K80, and K96.

It belongs to the universal ribosomal protein uS13 family. Component of the small ribosomal subunit (SSU). Mature yeast ribosomes consist of a small (40S) and a large (60S) subunit. The 40S small subunit contains 1 molecule of ribosomal RNA (18S rRNA) and 33 different proteins (encoded by 57 genes). The large 60S subunit contains 3 rRNA molecules (25S, 5.8S and 5S rRNA) and 46 different proteins (encoded by 81 genes). Post-translationally, N-terminally acetylated by acetyltransferase NatA.

It is found in the cytoplasm. Its function is as follows. Component of the ribosome, a large ribonucleoprotein complex responsible for the synthesis of proteins in the cell. The small ribosomal subunit (SSU) binds messenger RNAs (mRNAs) and translates the encoded message by selecting cognate aminoacyl-transfer RNA (tRNA) molecules. The large subunit (LSU) contains the ribosomal catalytic site termed the peptidyl transferase center (PTC), which catalyzes the formation of peptide bonds, thereby polymerizing the amino acids delivered by tRNAs into a polypeptide chain. The nascent polypeptides leave the ribosome through a tunnel in the LSU and interact with protein factors that function in enzymatic processing, targeting, and the membrane insertion of nascent chains at the exit of the ribosomal tunnel. The sequence is that of Small ribosomal subunit protein uS13A from Saccharomyces cerevisiae (strain ATCC 204508 / S288c) (Baker's yeast).